A 288-amino-acid polypeptide reads, in one-letter code: Peroxisomal membrane protein pex13 (288 aa).

The disordered stretch occupies residues 1–32 (METNQNEKGPSLPSYPAGGIMSVSNSNADTNQ). Over residues 22–32 (SVSNSNADTNQ) the composition is skewed to polar residues. Residues 178–198 (IYSIVSSLAIILGLVGLPYAI) form a helical membrane-spanning segment. An SH3 domain is found at 222–288 (DSLEFCKADY…PSNYCSIISR (67 aa)).

The protein belongs to the peroxin-13 family. Interacts (via SH3 domain) with PEX14 (via SH3-binding motif); forming the PEX13-PEX14 docking complex.

It is found in the peroxisome membrane. Functionally, component of the PEX13-PEX14 docking complex, a translocon channel that specifically mediates the import of peroxisomal cargo proteins bound to PEX5 receptor. The PEX13-PEX14 docking complex forms a large import pore which can be opened to a diameter of about 9 nm. Mechanistically, PEX5 receptor along with cargo proteins associates with the PEX14 subunit of the PEX13-PEX14 docking complex in the cytosol, leading to the insertion of the receptor into the organelle membrane with the concomitant translocation of the cargo into the peroxisome matrix. The chain is Peroxisomal membrane protein pex13 (pex13) from Schizosaccharomyces pombe (strain 972 / ATCC 24843) (Fission yeast).